Here is a 118-residue protein sequence, read N- to C-terminus: Basic phospholipase A2 PA-12A (118 aa).

Cystine bridges form between C11-C71, C27-C117, C29-C45, C44-C98, C51-C91, C60-C84, and C78-C89. Residues Y28, G30, and G32 each contribute to the Ca(2+) site. The active site involves H48. D49 contributes to the Ca(2+) binding site. D92 is a catalytic residue.

It belongs to the phospholipase A2 family. Group I subfamily. D49 sub-subfamily. The cofactor is Ca(2+). As to expression, expressed by the venom gland.

The protein resides in the secreted. It carries out the reaction a 1,2-diacyl-sn-glycero-3-phosphocholine + H2O = a 1-acyl-sn-glycero-3-phosphocholine + a fatty acid + H(+). Functionally, PLA2 catalyzes the calcium-dependent hydrolysis of the 2-acyl groups in 3-sn-phosphoglycerides. The sequence is that of Basic phospholipase A2 PA-12A from Pseudechis australis (Mulga snake).